We begin with the raw amino-acid sequence, 415 residues long: Calcium/calmodulin-dependent serine/threonine-protein kinase (415 aa).

The Protein kinase domain maps to 12–308; the sequence is YEISEILGRG…AQELLDHPWV (297 aa). Residues 18 to 26 and lysine 46 contribute to the ATP site; that span reads LGRGGFSVV. Catalysis depends on aspartate 173, which acts as the Proton acceptor. A calmodulin-binding region spans residues 318–328; that stretch reads MDAEIVSRLQS.

This sequence belongs to the protein kinase superfamily. CAMK Ser/Thr protein kinase family. CaMK subfamily.

The enzyme catalyses L-seryl-[protein] + ATP = O-phospho-L-seryl-[protein] + ADP + H(+). The catalysed reaction is L-threonyl-[protein] + ATP = O-phospho-L-threonyl-[protein] + ADP + H(+). May be involved in signal transduction processes. The sequence is that of Calcium/calmodulin-dependent serine/threonine-protein kinase from Malus domestica (Apple).